The chain runs to 457 residues: tRNA modification GTPase MnmE (457 aa).

Positions 25, 87, and 126 each coordinate (6S)-5-formyl-5,6,7,8-tetrahydrofolate. Residues 223 to 377 (GISTAIIGRP…IEERINQLFF (155 aa)) form the TrmE-type G domain. Asparagine 233 lines the K(+) pocket. GTP-binding positions include 233 to 238 (NVGKSS), 252 to 258 (TDIEGTT), and 277 to 280 (DTAG). Serine 237 serves as a coordination point for Mg(2+). The K(+) site is built by threonine 252, isoleucine 254, and threonine 257. Residue threonine 258 participates in Mg(2+) binding. Lysine 457 contacts (6S)-5-formyl-5,6,7,8-tetrahydrofolate.

It belongs to the TRAFAC class TrmE-Era-EngA-EngB-Septin-like GTPase superfamily. TrmE GTPase family. In terms of assembly, homodimer. Heterotetramer of two MnmE and two MnmG subunits. The cofactor is K(+).

The protein resides in the cytoplasm. In terms of biological role, exhibits a very high intrinsic GTPase hydrolysis rate. Involved in the addition of a carboxymethylaminomethyl (cmnm) group at the wobble position (U34) of certain tRNAs, forming tRNA-cmnm(5)s(2)U34. The polypeptide is tRNA modification GTPase MnmE (Streptococcus sanguinis (strain SK36)).